Consider the following 406-residue polypeptide: Transforming growth factor beta regulator 1 (406 aa).

Disordered regions lie at residues 1–28 (MSVLSGLASEPRTPLSSKARMKRLPRKS) and 109–144 (SSVGTMQGAGPSTGAEEPFAKKSKKEKKEKGKENSK). At Ser2 the chain carries N-acetylserine. Phosphothreonine is present on Thr13. Residues 134 to 144 (EKKEKGKENSK) show a composition bias toward basic and acidic residues. Positions 177 to 236 (VFPIGLGGLTVYSLGEIITNRPGFHDENAIYPVGYCSTRVYASMKCPDQKCLYTCQIKDG) constitute an FYR N-terminal domain. An FYR C-terminal domain is found at 237–316 (GVQPQFEIVP…QNCVNYQWVK (80 aa)).

Belongs to the TBRG1 family. In terms of assembly, interacts with CDKN2A and MDM2. In terms of processing, ubiquitinated; mediated by MDM2 and leading to its subsequent proteasomal degradation.

It localises to the nucleus. In terms of biological role, acts as a growth inhibitor. Can activate p53/TP53, causes G1 arrest and collaborates with CDKN2A to restrict proliferation, but does not require either protein to inhibit DNA synthesis. Redistributes CDKN2A into the nucleoplasm. Involved in maintaining chromosomal stability. This chain is Transforming growth factor beta regulator 1 (Tbrg1), found in Mus musculus (Mouse).